A 399-amino-acid polypeptide reads, in one-letter code: CCA-adding enzyme (399 aa).

Gly-32 and Arg-35 together coordinate ATP. 2 residues coordinate CTP: Gly-32 and Arg-35. Residues Asp-45 and Asp-47 each coordinate Mg(2+). ATP is bound by residues Arg-116, Asp-159, Arg-162, Arg-165, and Arg-168. CTP-binding residues include Arg-116, Asp-159, Arg-162, Arg-165, and Arg-168.

This sequence belongs to the tRNA nucleotidyltransferase/poly(A) polymerase family. Bacterial CCA-adding enzyme type 3 subfamily. In terms of assembly, homodimer. Requires Mg(2+) as cofactor.

It catalyses the reaction a tRNA precursor + 2 CTP + ATP = a tRNA with a 3' CCA end + 3 diphosphate. The catalysed reaction is a tRNA with a 3' CCA end + 2 CTP + ATP = a tRNA with a 3' CCACCA end + 3 diphosphate. In terms of biological role, catalyzes the addition and repair of the essential 3'-terminal CCA sequence in tRNAs without using a nucleic acid template. Adds these three nucleotides in the order of C, C, and A to the tRNA nucleotide-73, using CTP and ATP as substrates and producing inorganic pyrophosphate. tRNA 3'-terminal CCA addition is required both for tRNA processing and repair. Also involved in tRNA surveillance by mediating tandem CCA addition to generate a CCACCA at the 3' terminus of unstable tRNAs. While stable tRNAs receive only 3'-terminal CCA, unstable tRNAs are marked with CCACCA and rapidly degraded. This chain is CCA-adding enzyme, found in Streptococcus pneumoniae (strain CGSP14).